Consider the following 354-residue polypeptide: Arginase-2, mitochondrial (354 aa).

The N-terminal 22 residues, 1 to 22, are a transit peptide targeting the mitochondrion; sequence MFLRSSASRLLHGQIPCVLTRS. Residues His120, Asp143, His145, and Asp147 each contribute to the Mn(2+) site. Residues 145-149, 156-158, and Glu202 contribute to the substrate site; these read HADIN and SGN. Mn(2+)-binding residues include Asp251 and Asp253. Substrate contacts are provided by Thr265 and Glu296.

This sequence belongs to the arginase family. In terms of assembly, homotrimer. It depends on Mn(2+) as a cofactor.

It is found in the mitochondrion. It carries out the reaction L-arginine + H2O = urea + L-ornithine. It functions in the pathway nitrogen metabolism; urea cycle; L-ornithine and urea from L-arginine: step 1/1. May play a role in the regulation of extra-urea cycle arginine metabolism and also in down-regulation of nitric oxide synthesis. Extrahepatic arginase functions to regulate L-arginine bioavailability to nitric oxid synthase (NOS). Arginine metabolism is a critical regulator of innate and adaptive immune responses. Seems to be involved in negative regulation of the survival capacity of activated CD4(+) and CD8(+) T cells. May suppress inflammation-related signaling in asthmatic airway epithelium. May contribute to the immune evasion of H.pylori by restricting M1 macrophage activation and polyamine metabolism. May play a role in promoting prenatal immune suppression. Regulates RPS6KB1 signaling, which promotes endothelial cell senescence and inflammation and implicates NOS3/eNOS dysfunction. Can inhibit endothelial autophagy independently of its enzymatic activity implicating mTORC2 signaling. Involved in vascular smooth muscle cell senescence and apoptosis independently of its enzymatic activity. In Mus musculus (Mouse), this protein is Arginase-2, mitochondrial (Arg2).